Here is a 319-residue protein sequence, read N- to C-terminus: V-set and transmembrane domain-containing protein 4 (319 aa).

Positions M1–A23 are cleaved as a signal peptide. The 131-residue stretch at L24–S154 folds into the Ig-like domain. N-linked (GlcNAc...) asparagine glycans are attached at residues N25 and N41. C46 and C126 are oxidised to a cystine. Residue N143 is glycosylated (N-linked (GlcNAc...) asparagine). Residues A180 to W200 traverse the membrane as a helical segment.

In terms of processing, proteolytically cleaved to generate a bioactive peptide. As to expression, peptide Lv is widely expressed in various tissues and the central nervous system, including the retinal photoreceptor layer, hippocampus, olfactory bulb, and cerebellum.

The protein resides in the cell membrane. It localises to the secreted. In terms of biological role, peptide Lv enhances L-type voltage-gated calcium channel (L-VGCC) currents in retinal photoreceptors. This is V-set and transmembrane domain-containing protein 4 (Vstm4) from Mus musculus (Mouse).